A 596-amino-acid polypeptide reads, in one-letter code: Transcription factor COE3 (596 aa).

The segment at 1–22 (MFGIQENIPRGGTTMKEEPLGS) is disordered. Residues 63–66 (RKSN) form an interaction with DNA region. Residues 151-170 (CRVLLTHEIMCSRCCDKKSC) form a C5-type zinc finger. Interaction with DNA stretches follow at residues 197-204 (NCLKNAGN) and 236-239 (NNSK). One can recognise an IPT/TIG domain in the interval 263–346 (PCIKAISPSE…KGAPGRFVYT (84 aa)). The tract at residues 451–483 (TSQANDQVGYSRNTSSVSPRGYVPSSTPQQSNY) is disordered.

It belongs to the COE family. In terms of assembly, forms either a homodimer or a heterodimer with a related family member. Expressed in brain.

It is found in the nucleus. Transcriptional activator. Recognizes variations of the palindromic sequence 5'-ATTCCCNNGGGAATT-3'. The polypeptide is Transcription factor COE3 (EBF3) (Homo sapiens (Human)).